A 1051-amino-acid chain; its full sequence is Integrin alpha-3 (1051 aa).

An N-terminal signal peptide occupies residues methionine 1–alanine 32. Topologically, residues phenylalanine 33 to glutamate 991 are extracellular. FG-GAP repeat units lie at residues arginine 38–cysteine 103, glutamate 110–leucine 171, cysteine 185–serine 235, glutamate 236–leucine 292, lysine 293–proline 354, glutamine 356–arginine 411, and glutamine 415–proline 477. A glycan (N-linked (GlcNAc...) asparagine) is linked at asparagine 86. 3 cysteine pairs are disulfide-bonded: cysteine 94–cysteine 103, cysteine 140–cysteine 162, and cysteine 185–cysteine 197. Residues aspartate 315, asparagine 317, aspartate 319, aspartate 323, aspartate 378, asparagine 380, aspartate 382, aspartate 386, aspartate 439, aspartate 441, asparagine 443, tyrosine 445, and aspartate 447 each coordinate Ca(2+). 2 disulfides stabilise this stretch: cysteine 485–cysteine 490 and cysteine 496–cysteine 550. Asparagine 500, asparagine 511, asparagine 573, and asparagine 605 each carry an N-linked (GlcNAc...) asparagine glycan. A disulfide bridge links cysteine 615 with cysteine 621. N-linked (GlcNAc...) asparagine glycosylation is found at asparagine 656, asparagine 697, and asparagine 841. Residues cysteine 694 and cysteine 702 are joined by a disulfide bond. Cystine bridges form between cysteine 846–cysteine 904 and cysteine 911–cysteine 916. The disordered stretch occupies residues leucine 860–valine 888. N-linked (GlcNAc...) asparagine glycosylation is found at asparagine 923, asparagine 926, asparagine 935, and asparagine 969. The chain crosses the membrane as a helical span at residues leucine 992–phenylalanine 1019. A GFFKR motif motif is present at residues glycine 1017–arginine 1021. Residues lysine 1020–tyrosine 1051 are Cytoplasmic-facing.

It belongs to the integrin alpha chain family. As to quaternary structure, heterodimer of an alpha and a beta subunit. The alpha subunit is composed of a heavy and a light chain linked by a disulfide bond. Alpha-3 associates with beta-1. Interacts with HPS5. Interacts with FAP (seprase); the interaction occurs at the cell surface of invadopodia membrane in a collagen-dependent manner. Post-translationally, isoform 1, but not isoform 2, is phosphorylated on serine residues.

Its subcellular location is the cell membrane. It localises to the cell projection. The protein resides in the invadopodium membrane. It is found in the filopodium membrane. Functionally, integrin alpha-3/beta-1 is a receptor for fibronectin, laminin, collagen, epiligrin, thrombospondin and CSPG4. Integrin alpha-3/beta-1 provides a docking site for FAP (seprase) at invadopodia plasma membranes in a collagen-dependent manner and hence may participate in the adhesion, formation of invadopodia and matrix degradation processes, promoting cell invasion. Alpha-3/beta-1 may mediate with LGALS3 the stimulation by CSPG4 of endothelial cells migration. The protein is Integrin alpha-3 (ITGA3) of Cricetulus griseus (Chinese hamster).